Reading from the N-terminus, the 313-residue chain is 2-dehydro-3-deoxygluconokinase/2-dehydro-3-deoxygalactonokinase (313 aa).

Residues 34–38, Tyr-90, 106–108, and Arg-166 each bind substrate; these read GSELN and YYR. ATP is bound by residues 164–166, 226–231, and 255–258; these read NIR, KLGSKG, and GAGD. Residues Asp-258 and Asp-294 each coordinate substrate. The Proton acceptor role is filled by Asp-258.

As to quaternary structure, homohexamer; trimer of dimers.

The enzyme catalyses 2-dehydro-3-deoxy-D-gluconate + ATP = 2-dehydro-3-deoxy-6-phospho-D-gluconate + ADP + H(+). It catalyses the reaction 2-dehydro-3-deoxy-D-galactonate + ATP = 2-dehydro-3-deoxy-6-phospho-D-galactonate + ADP + H(+). Its pathway is carbohydrate acid metabolism; 2-dehydro-3-deoxy-D-gluconate degradation; D-glyceraldehyde 3-phosphate and pyruvate from 2-dehydro-3-deoxy-D-gluconate: step 1/2. Its function is as follows. Involved in the degradation of glucose and galactose via the semi-phosphorylative Entner-Doudoroff pathway. Catalyzes the phosphorylation of 2-keto-3-deoxygluconate (KDG) and 2-keto-3-deoxygalactonate (KDGal) to produce 2-keto-3-deoxy-6-phosphogluconate (KDPG) and 2-keto-3-deoxy-6-phosphogalactonate (KDPGal), respectively. The sequence is that of 2-dehydro-3-deoxygluconokinase/2-dehydro-3-deoxygalactonokinase (kdgK) from Saccharolobus solfataricus (strain ATCC 35092 / DSM 1617 / JCM 11322 / P2) (Sulfolobus solfataricus).